The primary structure comprises 310 residues: Putative HTH-type transcriptional regulatory protein M1425_1284 (310 aa).

Positions 125–180 (LKHKREEMGYSIGDVAKFLGVSRKAIYDYEKGDSDVSLEVAEKLIDLFGDDIIGDV) constitute an HTH cro/C1-type domain. Residues 136 to 155 (IGDVAKFLGVSRKAIYDYEK) constitute a DNA-binding region (H-T-H motif).

This is Putative HTH-type transcriptional regulatory protein M1425_1284 from Saccharolobus islandicus (strain M.14.25 / Kamchatka #1) (Sulfolobus islandicus).